The primary structure comprises 147 residues: Hemoglobin subunit gamma (147 aa).

The 145-residue stretch at 3 to 147 folds into the Globin domain; the sequence is DFTAEEKAAI…VASAVARKYH (145 aa). The heme b site is built by His-64 and His-93.

This sequence belongs to the globin family. As to quaternary structure, heterotetramer of two alpha chains and two gamma chains in fetal hemoglobin (Hb F). Red blood cells.

Functionally, gamma chains make up the fetal hemoglobin F, in combination with alpha chains. This chain is Hemoglobin subunit gamma (HBG), found in Trichechus manatus (Caribbean manatee).